We begin with the raw amino-acid sequence, 152 residues long: Flagellar assembly factor FliW (152 aa).

This sequence belongs to the FliW family. As to quaternary structure, interacts with translational regulator CsrA and flagellin(s).

Its subcellular location is the cytoplasm. Acts as an anti-CsrA protein, binds CsrA and prevents it from repressing translation of its target genes, one of which is flagellin. Binds to flagellin and participates in the assembly of the flagellum. This chain is Flagellar assembly factor FliW, found in Caldicellulosiruptor saccharolyticus (strain ATCC 43494 / DSM 8903 / Tp8T 6331).